We begin with the raw amino-acid sequence, 186 residues long: UPF0301 protein LHK_02881 (186 aa).

It belongs to the UPF0301 (AlgH) family.

The protein is UPF0301 protein LHK_02881 of Laribacter hongkongensis (strain HLHK9).